The sequence spans 89 residues: Small ribosomal subunit protein uS14 (89 aa).

The protein belongs to the universal ribosomal protein uS14 family. In terms of assembly, part of the 30S ribosomal subunit. Contacts proteins S3 and S10.

Functionally, binds 16S rRNA, required for the assembly of 30S particles and may also be responsible for determining the conformation of the 16S rRNA at the A site. The sequence is that of Small ribosomal subunit protein uS14 from Shouchella clausii (strain KSM-K16) (Alkalihalobacillus clausii).